The primary structure comprises 563 residues: NADPH oxidase 1 (563 aa).

At 1–8 the chain is on the cytoplasmic side; that stretch reads MGNWLVNH. Residues 9–31 traverse the membrane as a helical segment; it reads WLSVLFLVSWLGLNIFLFVYVFL. The Extracellular portion of the chain corresponds to 32–44; it reads NYEKSDKYYYTRE. Residues 45–69 traverse the membrane as a helical segment; sequence ILGTALALARASALCLNFNSMVILI. The region spanning 54–282 is the Ferric oxidoreductase domain; the sequence is RASALCLNFN…LAPIAFYIFE (229 aa). Residues 70–102 lie on the Cytoplasmic side of the membrane; the sequence is PVCRNLLSFLRGTCSFCNHTLRKPLDHNLTFHK. Heme-binding residues include H101 and H115. The chain crosses the membrane as a helical span at residues 103–123; sequence LVAYMICIFTAIHIIAHLFNF. Residues 124-167 are Extracellular-facing; the sequence is ERYSRSQQAMDGSLASVLSSLFHPEKEDSWLNPIQSPNVTVMYA. A glycan (N-linked (GlcNAc...) asparagine) is linked at N161. The helical transmembrane segment at 168–188 threads the bilayer; it reads AFTSIAGLTGVVATVALVLMV. The Cytoplasmic segment spans residues 189–206; that stretch reads TSAMEFIRRNYFELFWYT. Residues 207-227 traverse the membrane as a helical segment; sequence HHLFIIYIICLGIHGLGGIVR. Heme contacts are provided by H208 and H220. The Extracellular portion of the chain corresponds to 228 to 395; that stretch reads GQTEESMSES…TVSEDVFQYE (168 aa). N241 is a glycosylation site (N-linked (GlcNAc...) asparagine). The FAD-binding FR-type domain occupies 283-390; it reads RILRFYRSRQ…DGPFGTVSED (108 aa). 337 to 343 is an FAD binding site; that stretch reads HPFTLTS. The chain crosses the membrane as a helical span at residues 396 to 416; it reads VAVLVGAGIGVTPFASFLKSI. An interaction with NOXO1 region spans residues 396–535; the sequence is VAVLVGAGIG…GVFLCGPPTL (140 aa). The Cytoplasmic portion of the chain corresponds to 417–563; that stretch reads WYKFQRAHNK…VQFYFNKETF (147 aa). Residue T429 is modified to Phosphothreonine; by PKC/PRKCB.

In terms of assembly, NOX1, NOXA1, NOXO1, RAC1 and CYBA forms a functional multimeric complex supporting ROS production. Interacts with NOXO1. Interacts (via FAD-binding FR-type domain) with ARHGEF7 (via PH domain). The phosphorylated form at Thr-429 interacts with NOXA1 with greater affinity. It depends on FAD as a cofactor. Phosphorylation at Thr-429 mediated by PKC/PRKBC positively regulates its interaction with NOXA1 and enzyme activity. In terms of tissue distribution, expressed in vascular smooth muscle cells.

It localises to the cell projection. Its subcellular location is the invadopodium membrane. It is found in the cell membrane. The catalysed reaction is NADPH + 2 O2 = 2 superoxide + NADP(+) + H(+). With respect to regulation, the oxidase activity is potentiated by NOXA1 and NOXO1. NADPH oxidase that catalyzes the generation of superoxide from molecular oxygen utilizing NADPH as an electron donor. This Rattus norvegicus (Rat) protein is NADPH oxidase 1 (Nox1).